We begin with the raw amino-acid sequence, 242 residues long: ATP synthase subunit a (242 aa).

5 helical membrane passes run 21–41 (LSSI…AIIC), 83–103 (AVTL…FSIV), 117–137 (DATV…FYGI), 175–195 (LYGN…LFFN), and 198–218 (AWGW…SIFV).

The protein belongs to the ATPase A chain family. F-type ATPases have 2 components, CF(1) - the catalytic core - and CF(0) - the membrane proton channel. CF(1) has five subunits: alpha(3), beta(3), gamma(1), delta(1), epsilon(1). CF(0) has three main subunits: a(1), b(2) and c(9-12). The alpha and beta chains form an alternating ring which encloses part of the gamma chain. CF(1) is attached to CF(0) by a central stalk formed by the gamma and epsilon chains, while a peripheral stalk is formed by the delta and b chains.

Its subcellular location is the cell membrane. In terms of biological role, key component of the proton channel; it plays a direct role in the translocation of protons across the membrane. In Staphylococcus aureus (strain Newman), this protein is ATP synthase subunit a.